The sequence spans 125 residues: Phosphoribosyl-AMP cyclohydrolase (125 aa).

Asp74 lines the Mg(2+) pocket. Position 75 (Cys75) interacts with Zn(2+). Mg(2+) contacts are provided by Asp76 and Asp78. Residues Cys92 and Cys99 each coordinate Zn(2+).

The protein belongs to the PRA-CH family. Homodimer. It depends on Mg(2+) as a cofactor. Requires Zn(2+) as cofactor.

The protein localises to the cytoplasm. It carries out the reaction 1-(5-phospho-beta-D-ribosyl)-5'-AMP + H2O = 1-(5-phospho-beta-D-ribosyl)-5-[(5-phospho-beta-D-ribosylamino)methylideneamino]imidazole-4-carboxamide. The protein operates within amino-acid biosynthesis; L-histidine biosynthesis; L-histidine from 5-phospho-alpha-D-ribose 1-diphosphate: step 3/9. In terms of biological role, catalyzes the hydrolysis of the adenine ring of phosphoribosyl-AMP. The protein is Phosphoribosyl-AMP cyclohydrolase of Pelobacter propionicus (strain DSM 2379 / NBRC 103807 / OttBd1).